The sequence spans 264 residues: Elongation factor Ts (264 aa).

An involved in Mg(2+) ion dislocation from EF-Tu region spans residues 76 to 79 (TDFV).

It belongs to the EF-Ts family.

The protein resides in the cytoplasm. Its function is as follows. Associates with the EF-Tu.GDP complex and induces the exchange of GDP to GTP. It remains bound to the aminoacyl-tRNA.EF-Tu.GTP complex up to the GTP hydrolysis stage on the ribosome. This is Elongation factor Ts from Deinococcus deserti (strain DSM 17065 / CIP 109153 / LMG 22923 / VCD115).